Consider the following 74-residue polypeptide: MSRRRILILVLVTMLVKTMAGMESKWVETTYEIKKRSGTSEKERESGRLLGVVKRLIVGFRSPFRGRRAISEQT.

Residues 1 to 21 form the signal peptide; the sequence is MSRRRILILVLVTMLVKTMAG. A propeptide spanning residues 22–33 is cleaved from the precursor; sequence MESKWVETTYEI. Position 65 is an arginine amide (Arg-65). A propeptide spanning residues 69–74 is cleaved from the precursor; the sequence is AISEQT.

The protein belongs to the non-disulfide-bridged peptide (NDBP) superfamily. Medium-length antimicrobial peptide (group 3) family. As to expression, expressed by the venom gland.

It is found in the secreted. The protein localises to the target cell membrane. In terms of biological role, possesses antimicrobial activity against both Gram-negative and Gram-positive bacteria, as well as against the fungus C.tropicalis. Also possesses a relatively high hemolytic activity. May act by disrupting the integrity of the bacterial cell membrane. The chain is Antimicrobial peptide HsAp4 from Heterometrus spinifer (Asia giant forest scorpion).